An 87-amino-acid polypeptide reads, in one-letter code: Mitochondrial import inner membrane translocase subunit TIM8 (87 aa).

The Twin CX3C motif motif lies at 44–68 (CFKNCISNVQNADLSSQEEQCLNNC). 2 disulfide bridges follow: C44/C68 and C48/C64.

The protein belongs to the small Tim family. As to quaternary structure, heterohexamer; composed of 3 copies of TIM8 and 3 copies of TIM13, named soluble 70 kDa complex. Associates with the TIM22 complex, whose core is composed of TIM22 and TIM54. Interacts with the transmembrane regions of multi-pass transmembrane proteins in transit.

The protein localises to the mitochondrion inner membrane. Functionally, mitochondrial intermembrane chaperone that participates in the import and insertion of some multi-pass transmembrane proteins into the mitochondrial inner membrane. Also required for the transfer of beta-barrel precursors from the TOM complex to the sorting and assembly machinery (SAM complex) of the outer membrane. Acts as a chaperone-like protein that protects the hydrophobic precursors from aggregation and guide them through the mitochondrial intermembrane space. The TIM8-TIM13 complex is non essential and only mediates the import of few proteins, while the predominant TIM9-TIM10 70 kDa complex is crucial and mediates the import of much more proteins. The polypeptide is Mitochondrial import inner membrane translocase subunit TIM8 (TIM8) (Kluyveromyces lactis (strain ATCC 8585 / CBS 2359 / DSM 70799 / NBRC 1267 / NRRL Y-1140 / WM37) (Yeast)).